A 605-amino-acid polypeptide reads, in one-letter code: Aspartate--tRNA(Asp/Asn) ligase (605 aa).

L-aspartate is bound at residue glutamate 186. Residues 210–213 are aspartate; it reads QQFK. L-aspartate-binding residues include arginine 232 and histidine 460. 232–234 lines the ATP pocket; that stretch reads RDE. Glutamate 494 is an ATP binding site. Arginine 501 contributes to the L-aspartate binding site. 546 to 549 lines the ATP pocket; sequence GLDR.

This sequence belongs to the class-II aminoacyl-tRNA synthetase family. Type 1 subfamily. Homodimer.

It is found in the cytoplasm. It carries out the reaction tRNA(Asx) + L-aspartate + ATP = L-aspartyl-tRNA(Asx) + AMP + diphosphate. Aspartyl-tRNA synthetase with relaxed tRNA specificity since it is able to aspartylate not only its cognate tRNA(Asp) but also tRNA(Asn). Reaction proceeds in two steps: L-aspartate is first activated by ATP to form Asp-AMP and then transferred to the acceptor end of tRNA(Asp/Asn). This chain is Aspartate--tRNA(Asp/Asn) ligase, found in Chlorobium chlorochromatii (strain CaD3).